We begin with the raw amino-acid sequence, 305 residues long: Nitrogen assimilation regulatory protein nac (305 aa).

In terms of domain architecture, HTH lysR-type spans Met1–Thr58. The segment at residues Leu18 to Ala37 is a DNA-binding region (H-T-H motif).

Belongs to the LysR transcriptional regulatory family.

Functionally, transcriptional activator for the hut, put and ure operons and repressor for the gdh and gltB operons in response to nitrogen limitation. Negative regulator of its own expression. The protein is Nitrogen assimilation regulatory protein nac (nac) of Escherichia coli (strain K12).